Here is a 355-residue protein sequence, read N- to C-terminus: Tetraacyldisaccharide 4'-kinase (355 aa).

Y64–T71 serves as a coordination point for ATP. The disordered stretch occupies residues N206–A226. A compositionally biased stretch (low complexity) spans A208 to G222.

The protein belongs to the LpxK family.

It carries out the reaction a lipid A disaccharide + ATP = a lipid IVA + ADP + H(+). Its pathway is glycolipid biosynthesis; lipid IV(A) biosynthesis; lipid IV(A) from (3R)-3-hydroxytetradecanoyl-[acyl-carrier-protein] and UDP-N-acetyl-alpha-D-glucosamine: step 6/6. Transfers the gamma-phosphate of ATP to the 4'-position of a tetraacyldisaccharide 1-phosphate intermediate (termed DS-1-P) to form tetraacyldisaccharide 1,4'-bis-phosphate (lipid IVA). In Bordetella petrii (strain ATCC BAA-461 / DSM 12804 / CCUG 43448), this protein is Tetraacyldisaccharide 4'-kinase.